The sequence spans 185 residues: Orotate phosphoribosyltransferase (185 aa).

Residues Arg94, Lys95, Lys98, His100, and Glu120 to Ser128 contribute to the 5-phospho-alpha-D-ribose 1-diphosphate site. Residues Thr124 and Arg152 each contribute to the orotate site.

The protein belongs to the purine/pyrimidine phosphoribosyltransferase family. PyrE subfamily. In terms of assembly, homodimer. Mg(2+) serves as cofactor.

The enzyme catalyses orotidine 5'-phosphate + diphosphate = orotate + 5-phospho-alpha-D-ribose 1-diphosphate. The protein operates within pyrimidine metabolism; UMP biosynthesis via de novo pathway; UMP from orotate: step 1/2. In terms of biological role, catalyzes the transfer of a ribosyl phosphate group from 5-phosphoribose 1-diphosphate to orotate, leading to the formation of orotidine monophosphate (OMP). The protein is Orotate phosphoribosyltransferase of Thermococcus kodakarensis (strain ATCC BAA-918 / JCM 12380 / KOD1) (Pyrococcus kodakaraensis (strain KOD1)).